The chain runs to 146 residues: MRVLVQRAKRGSVRVDQKTVGDIGPGLVLLVGIHQEDTEADVRFCAEKVAHLRIFEDSSAKMNESVLDQGGSVLSISQFTLYGDCKKGRRPNFMRAAKPEKAKLLYERFNSYLRELGLVVETGEFGAMMEVELINDGPVTILVESE.

The Gly-cisPro motif, important for rejection of L-amino acids signature appears at 137–138 (GP).

It belongs to the DTD family. In terms of assembly, homodimer.

It localises to the cytoplasm. The enzyme catalyses glycyl-tRNA(Ala) + H2O = tRNA(Ala) + glycine + H(+). The catalysed reaction is a D-aminoacyl-tRNA + H2O = a tRNA + a D-alpha-amino acid + H(+). Its function is as follows. An aminoacyl-tRNA editing enzyme that deacylates mischarged D-aminoacyl-tRNAs. Also deacylates mischarged glycyl-tRNA(Ala), protecting cells against glycine mischarging by AlaRS. Acts via tRNA-based rather than protein-based catalysis; rejects L-amino acids rather than detecting D-amino acids in the active site. By recycling D-aminoacyl-tRNA to D-amino acids and free tRNA molecules, this enzyme counteracts the toxicity associated with the formation of D-aminoacyl-tRNA entities in vivo and helps enforce protein L-homochirality. The sequence is that of D-aminoacyl-tRNA deacylase from Shouchella clausii (strain KSM-K16) (Alkalihalobacillus clausii).